A 314-amino-acid polypeptide reads, in one-letter code: Large ribosomal subunit protein uL10 (314 aa).

Residues 281–314 (GSTQETPEEKKEEAKKEEKSPDESISEGLGALFQ) are disordered. A compositionally biased stretch (basic and acidic residues) spans 287 to 302 (PEEKKEEAKKEEKSPD).

The protein belongs to the universal ribosomal protein uL10 family. As to quaternary structure, part of the 50S ribosomal subunit. Forms part of the ribosomal stalk which helps the ribosome interact with GTP-bound translation factors. Forms a heptameric L10(L12)2(L12)2(L12)2 complex, where L10 forms an elongated spine to which the L12 dimers bind in a sequential fashion.

Its function is as follows. Forms part of the ribosomal stalk, playing a central role in the interaction of the ribosome with GTP-bound translation factors. The protein is Large ribosomal subunit protein uL10 of Thermoplasma acidophilum (strain ATCC 25905 / DSM 1728 / JCM 9062 / NBRC 15155 / AMRC-C165).